The primary structure comprises 332 residues: Biotin synthase (332 aa).

Positions 53 to 282 (HFGKKVKLNM…TKEIRISGGR (230 aa)) constitute a Radical SAM core domain. The [4Fe-4S] cluster site is built by Cys-71, Cys-75, and Cys-78. [2Fe-2S] cluster is bound by residues Cys-115, Cys-147, Cys-207, and Arg-277.

Belongs to the radical SAM superfamily. Biotin synthase family. Homodimer. The cofactor is [4Fe-4S] cluster. It depends on [2Fe-2S] cluster as a cofactor.

It carries out the reaction (4R,5S)-dethiobiotin + (sulfur carrier)-SH + 2 reduced [2Fe-2S]-[ferredoxin] + 2 S-adenosyl-L-methionine = (sulfur carrier)-H + biotin + 2 5'-deoxyadenosine + 2 L-methionine + 2 oxidized [2Fe-2S]-[ferredoxin]. It functions in the pathway cofactor biosynthesis; biotin biosynthesis; biotin from 7,8-diaminononanoate: step 2/2. Functionally, catalyzes the conversion of dethiobiotin (DTB) to biotin by the insertion of a sulfur atom into dethiobiotin via a radical-based mechanism. The protein is Biotin synthase of Bacillus cereus (strain AH187).